A 340-amino-acid chain; its full sequence is RNA 3'-terminal phosphate cyclase (340 aa).

Residues Gln-102 and Phe-284–Gln-288 contribute to the ATP site. Residue His-308 is the Tele-AMP-histidine intermediate of the active site.

Belongs to the RNA 3'-terminal cyclase family. Type 1 subfamily.

The protein localises to the cytoplasm. The enzyme catalyses a 3'-end 3'-phospho-ribonucleotide-RNA + ATP = a 3'-end 2',3'-cyclophospho-ribonucleotide-RNA + AMP + diphosphate. Functionally, catalyzes the conversion of 3'-phosphate to a 2',3'-cyclic phosphodiester at the end of RNA. The mechanism of action of the enzyme occurs in 3 steps: (A) adenylation of the enzyme by ATP; (B) transfer of adenylate to an RNA-N3'P to produce RNA-N3'PP5'A; (C) and attack of the adjacent 2'-hydroxyl on the 3'-phosphorus in the diester linkage to produce the cyclic end product. The biological role of this enzyme is unknown but it is likely to function in some aspects of cellular RNA processing. This is RNA 3'-terminal phosphate cyclase from Thermococcus onnurineus (strain NA1).